The sequence spans 354 residues: Peptide chain release factor 1 (354 aa).

Gln230 carries the N5-methylglutamine modification.

Belongs to the prokaryotic/mitochondrial release factor family. Post-translationally, methylated by PrmC. Methylation increases the termination efficiency of RF1.

The protein resides in the cytoplasm. Functionally, peptide chain release factor 1 directs the termination of translation in response to the peptide chain termination codons UAG and UAA. This is Peptide chain release factor 1 from Rhodospirillum rubrum (strain ATCC 11170 / ATH 1.1.1 / DSM 467 / LMG 4362 / NCIMB 8255 / S1).